The primary structure comprises 299 residues: Cathepsin B-like CP3 (299 aa).

The signal sequence occupies residues 1–19 (MKLFLLAAAAFSAPALTVS). 3 disulfides stabilise this stretch: Cys87–Cys114, Cys97–Cys140, and Cys133–Cys176. Cys100 is a catalytic residue. Residues His244 and Asn265 contribute to the active site.

Belongs to the peptidase C1 family.

It localises to the vacuole. Its function is as follows. Thiol protease which is required for parasite excystation and invasion of the proximal small intestine of the human host. This chain is Cathepsin B-like CP3 (CP3), found in Giardia intestinalis (Giardia lamblia).